Here is a 432-residue protein sequence, read N- to C-terminus: Glutamate-1-semialdehyde 2,1-aminomutase (432 aa).

An N6-(pyridoxal phosphate)lysine modification is found at lysine 271.

This sequence belongs to the class-III pyridoxal-phosphate-dependent aminotransferase family. HemL subfamily. As to quaternary structure, homodimer. The cofactor is pyridoxal 5'-phosphate.

It localises to the cytoplasm. It carries out the reaction (S)-4-amino-5-oxopentanoate = 5-aminolevulinate. It functions in the pathway porphyrin-containing compound metabolism; protoporphyrin-IX biosynthesis; 5-aminolevulinate from L-glutamyl-tRNA(Glu): step 2/2. Its pathway is porphyrin-containing compound metabolism; chlorophyll biosynthesis. The polypeptide is Glutamate-1-semialdehyde 2,1-aminomutase (Prochlorococcus marinus (strain NATL2A)).